The chain runs to 416 residues: Transmembrane protease serine 11B (416 aa).

Residues 1–17 (MYRHGISSQRSWPLWTT) are Cytoplasmic-facing. The helical; Signal-anchor for type II membrane protein transmembrane segment at 18-38 (IFIFLGVAAILGVTIGLLVHF) threads the bilayer. The Extracellular segment spans residues 39–416 (LAVEKTYYYQ…RNWITSKTGL (378 aa)). One can recognise an SEA domain in the interval 43-160 (KTYYYQGDFH…ASIKLMEISK (118 aa)). Asn72 and Asn107 each carry an N-linked (GlcNAc...) asparagine glycan. Residues 185-415 (IVNGKSSLEG…YRNWITSKTG (231 aa)) form the Peptidase S1 domain. Cys210 and Cys226 are joined by a disulfide. Catalysis depends on charge relay system residues His225 and Asp270. A glycan (N-linked (GlcNAc...) asparagine) is linked at Asn315. 2 disulfides stabilise this stretch: Cys335-Cys351 and Cys362-Cys391. The active-site Charge relay system is the Ser366.

The protein belongs to the peptidase S1 family.

Its subcellular location is the cell membrane. With respect to regulation, inhibited by aprotinin, leupeptin, benzamidine, SERPINA1, SPINT1 and SPINT2. Serine protease. This is Transmembrane protease serine 11B (TMPRSS11B) from Homo sapiens (Human).